Here is a 667-residue protein sequence, read N- to C-terminus: Bifunctional polymyxin resistance protein ArnA (667 aa).

The segment at 1-304 (MKAIVFAYHD…EMGIVTDVRL (304 aa)) is formyltransferase ArnAFT. The active-site Proton donor; for formyltransferase activity is His104. Residues Arg114 and 136–140 (VKKAD) contribute to the (6R)-10-formyltetrahydrofolate site. The segment at 314-667 (RRTRVLILGV…TAAPKDELNA (354 aa)) is dehydrogenase ArnADH. NAD(+)-binding positions include Asp347 and 368–369 (DI). Residues Ala393, Tyr398, and 432-433 (TS) each bind UDP-alpha-D-glucuronate. Glu434 (proton acceptor; for decarboxylase activity) is an active-site residue. Residues Arg460, Asn492, 526–535 (KLVDGGAQKR), and Tyr613 contribute to the UDP-alpha-D-glucuronate site. Arg619 (proton donor; for decarboxylase activity) is an active-site residue.

It in the N-terminal section; belongs to the Fmt family. UDP-L-Ara4N formyltransferase subfamily. This sequence in the C-terminal section; belongs to the NAD(P)-dependent epimerase/dehydratase family. UDP-glucuronic acid decarboxylase subfamily. In terms of assembly, homohexamer, formed by a dimer of trimers.

It carries out the reaction UDP-alpha-D-glucuronate + NAD(+) = UDP-beta-L-threo-pentopyranos-4-ulose + CO2 + NADH. The enzyme catalyses UDP-4-amino-4-deoxy-beta-L-arabinose + (6R)-10-formyltetrahydrofolate = UDP-4-deoxy-4-formamido-beta-L-arabinose + (6S)-5,6,7,8-tetrahydrofolate + H(+). It functions in the pathway nucleotide-sugar biosynthesis; UDP-4-deoxy-4-formamido-beta-L-arabinose biosynthesis; UDP-4-deoxy-4-formamido-beta-L-arabinose from UDP-alpha-D-glucuronate: step 1/3. Its pathway is nucleotide-sugar biosynthesis; UDP-4-deoxy-4-formamido-beta-L-arabinose biosynthesis; UDP-4-deoxy-4-formamido-beta-L-arabinose from UDP-alpha-D-glucuronate: step 3/3. It participates in bacterial outer membrane biogenesis; lipopolysaccharide biosynthesis. Its function is as follows. Bifunctional enzyme that catalyzes the oxidative decarboxylation of UDP-glucuronic acid (UDP-GlcUA) to UDP-4-keto-arabinose (UDP-Ara4O) and the addition of a formyl group to UDP-4-amino-4-deoxy-L-arabinose (UDP-L-Ara4N) to form UDP-L-4-formamido-arabinose (UDP-L-Ara4FN). The modified arabinose is attached to lipid A and is required for resistance to polymyxin and cationic antimicrobial peptides. The chain is Bifunctional polymyxin resistance protein ArnA from Yersinia pestis bv. Antiqua (strain Antiqua).